A 117-amino-acid chain; its full sequence is Large ribosomal subunit protein bL19 (117 aa).

The protein belongs to the bacterial ribosomal protein bL19 family.

This protein is located at the 30S-50S ribosomal subunit interface and may play a role in the structure and function of the aminoacyl-tRNA binding site. This chain is Large ribosomal subunit protein bL19, found in Phocaeicola vulgatus (strain ATCC 8482 / DSM 1447 / JCM 5826 / CCUG 4940 / NBRC 14291 / NCTC 11154) (Bacteroides vulgatus).